Here is a 240-residue protein sequence, read N- to C-terminus: MASEITYAEVRIKNESNSSVTYSGSPAAPREKPTRHLSKPGSLLVPFTSLMVLLLLLAITFLVAFIIYFQKYSQFLEEKKAIKGITHKELNCIKNVLLMEEKSWSCCPKNWKPFGSHCYWVTKHTSTYSKASWSESEKNCFSMGAHLLVIHSKEEQDFITGILNRDAAYFIGLWDSGHRQWQWVSQTPYNASATFWHKGEPSSDDEKCVIINHLNSGWGWNDIPCSGKQQSVCQMKKIQL.

Topologically, residues 1-48 (MASEITYAEVRIKNESNSSVTYSGSPAAPREKPTRHLSKPGSLLVPFT) are cytoplasmic. Residues 5 to 10 (ITYAEV) carry the ITIM motif motif. The interval 18–38 (SSVTYSGSPAAPREKPTRHLS) is disordered. The helical; Signal-anchor for type II membrane protein transmembrane segment at 49–69 (SLMVLLLLLAITFLVAFIIYF) threads the bilayer. At 70 to 240 (QKYSQFLEEK…SVCQMKKIQL (171 aa)) the chain is on the extracellular side. Cystine bridges form between cysteine 107–cysteine 118, cysteine 140–cysteine 233, and cysteine 208–cysteine 225. In terms of domain architecture, C-type lectin spans 129-235 (SKASWSESEK…SGKQQSVCQM (107 aa)). Ca(2+) is bound by residues valine 149 and glutamate 155. The N-linked (GlcNAc...) asparagine glycan is linked to asparagine 190. Residues glutamate 200, serine 202, and glutamate 206 each contribute to the Ca(2+) site. Alpha-D-mannopyranose-binding positions include 200–202 (EPS) and glutamate 206. 211–213 (INH) is an N-acetyl-D-glucosamine binding site. Ca(2+)-binding residues include asparagine 221 and aspartate 222.

As to quaternary structure, may interact with PTPN6 via its ITIM site. Expressed by myeloid cells (dendritic cells, macrophages, and neutrophils) and B-cells.

The protein localises to the cell membrane. Its function is as follows. C-type lectin receptor that binds carbohydrates mannose and fucose but also weakly interacts with N-acetylglucosamine (GlcNAc) in a Ca(2+)-dependent manner. Involved in regulating immune reactivity. Once triggered by antigen, it is internalized by clathrin-dependent endocytosis and delivers its antigenic cargo into the antigen presentation pathway resulting in cross-priming of CD8(+) T cells. This cross-presentation and cross-priming are enhanced by TLR7 and TLR8 agonists with increased expansion of the CD8(+) T cells, high production of IFNG and TNF with reduced levels of IL4, IL5 and IL13. In plasmacytoid dendritic cells, inhibits TLR9-mediated IFNA and TNF production. May be involved via its ITIM motif (immunoreceptor tyrosine-based inhibitory motifs) in the inhibition of B-cell-receptor-mediated calcium mobilization and protein tyrosine phosphorylation. This chain is C-type lectin domain family 4 member A (Clec4a), found in Rattus norvegicus (Rat).